A 334-amino-acid polypeptide reads, in one-letter code: Ornithine carbamoyltransferase (334 aa).

Carbamoyl phosphate-binding positions include 57-60, Gln84, Arg108, and 135-138; these read STRT and HPTQ. L-ornithine is bound by residues Asn169, Asp233, and 237 to 238; that span reads SM. Residues 275–276 and Arg320 contribute to the carbamoyl phosphate site; that span reads CL.

This sequence belongs to the aspartate/ornithine carbamoyltransferase superfamily. OTCase family. Homotrimer.

The protein resides in the cytoplasm. It carries out the reaction carbamoyl phosphate + L-ornithine = L-citrulline + phosphate + H(+). It participates in amino-acid biosynthesis; L-arginine biosynthesis; L-arginine from L-ornithine and carbamoyl phosphate: step 1/3. Functionally, reversibly catalyzes the transfer of the carbamoyl group from carbamoyl phosphate (CP) to the N(epsilon) atom of ornithine (ORN) to produce L-citrulline. This Vibrio vulnificus (strain CMCP6) protein is Ornithine carbamoyltransferase.